We begin with the raw amino-acid sequence, 823 residues long: Translation initiation factor IF-2 (823 aa).

2 disordered regions span residues 30–66 (VPPS…DDKR) and 156–192 (TPSH…IKKV). Polar residues predominate over residues 36–48 (RGTSTGKSFTTVE). Over residues 56-66 (PGEYISHDDKR) the composition is skewed to basic and acidic residues. The tr-type G domain occupies 322–491 (PRPPVVTVMG…LLLAEMLELS (170 aa)). Positions 331 to 338 (GHVDHGKT) are G1. Residue 331-338 (GHVDHGKT) participates in GTP binding. The interval 356-360 (GITQH) is G2. Positions 377–380 (DTPG) are G3. GTP contacts are provided by residues 377 to 381 (DTPGH) and 431 to 434 (NKID). A G4 region spans residues 431 to 434 (NKID). The segment at 467–469 (SAK) is G5.

This sequence belongs to the TRAFAC class translation factor GTPase superfamily. Classic translation factor GTPase family. IF-2 subfamily.

It localises to the cytoplasm. One of the essential components for the initiation of protein synthesis. Protects formylmethionyl-tRNA from spontaneous hydrolysis and promotes its binding to the 30S ribosomal subunits. Also involved in the hydrolysis of GTP during the formation of the 70S ribosomal complex. This chain is Translation initiation factor IF-2, found in Anaplasma phagocytophilum (strain HZ).